The following is an 822-amino-acid chain: BDNF/NT-3 growth factors receptor (822 aa).

An N-terminal signal peptide occupies residues 1–31 (MSSWIRWHGPAMARLWGFCWLVVGFWRAAFA). Disulfide bonds link Cys32–Cys38 and Cys36–Cys45. The region spanning 32 to 61 (CPTSCKCSASRIWCSDPSPGIVAFPRLEPN) is the LRRNT domain. Over 32 to 430 (CPTSCKCSAS…DVTDKTGREH (399 aa)) the chain is Extracellular. Asn67, Asn95, and Asn121 each carry an N-linked (GlcNAc...) asparagine glycan. LRR repeat units follow at residues 92–113 (GLRNLTIVDSGLKFVAHKAFLK) and 116–137 (NLQHINFTRNKLTSLSRKHFRH). The LRRCT domain maps to 148–196 (NPFTCSCDIMWIKTLQEAKSSPDTQDLYCLNESSKNIPLANLQIPNCGL). 2 disulfides stabilise this stretch: Cys152–Cys176 and Cys154–Cys194. N-linked (GlcNAc...) asparagine glycosylation is found at Asn178, Asn205, Asn241, Asn254, Asn280, Asn325, Asn338, and Asn412. 2 Ig-like C2-type domains span residues 197-282 (PSAN…VNLT) and 295-365 (PTSD…IAKN). A disulfide bond links Cys218 and Cys266. A disulfide bridge connects residues Cys302 and Cys345. Residues 431-454 (LSVYAVVVIASVVGFCLLVMLFLL) form a helical membrane-spanning segment. The interaction with MAPK8IP3/JIP3 stretch occupies residues 455 to 466 (KLARHSKFGMKG). Residues 455-822 (KLARHSKFGM…ASPVYLDILG (368 aa)) are Cytoplasmic-facing. Residues 475-498 (DDSASPLHHISNGSNTPSSSEGGP) are disordered. Residues 485-495 (SNGSNTPSSSE) show a composition bias toward polar residues. At Tyr516 the chain carries Phosphotyrosine; by autocatalysis. Residues 538–807 (IVLKRELGEG…KNIKGIHTLL (270 aa)) form the Protein kinase domain. Residues 544–552 (LGEGAFGKV) and Lys572 contribute to the ATP site. Asp676 acts as the Proton acceptor in catalysis. Residues Tyr702, Tyr706, Tyr707, and Tyr817 each carry the phosphotyrosine; by autocatalysis modification.

This sequence belongs to the protein kinase superfamily. Tyr protein kinase family. Insulin receptor subfamily. In terms of assembly, exists in a dynamic equilibrium between monomeric (low affinity) and dimeric (high affinity) structures. Interacts (phosphorylated upon activation by BDNF) with SHC1; mediates SHC1 phosphorylation and activation. Interacts (phosphorylated upon activation by BDNF) with PLCG1 and/or PLCG2; mediates PLCG1 phosphorylation and activation. Interacts with SH2B1 and SH2B2. Interacts with NGFR; may regulate the ligand specificity of the receptor. Interacts with SORCS2; this interaction is important for normal targeting to post-synaptic densities in response to high-frequency stimulation. Interacts (phosphorylated upon ligand-binding) with SH2D1A; regulates NTRK2. Interacts with SQSTM1 and KIDINS220. Interacts (phosphorylated upon ligand-binding) with FRS2; activates the MAPK signaling pathway. Interacts with APPL1. Interacts with MAPK8IP3/JIP3 and KLC1; interaction with KLC1 is mediated by MAPK8IP3/JIP3. Interacts with SORL1; this interaction facilitates NTRK2 trafficking between synaptic plasma membranes, postsynaptic densities and cell soma, hence positively regulates BDNF signaling. Interacts with SLITRK2. In terms of processing, phosphorylated. Undergoes ligand-mediated autophosphorylation that is required for interaction with SHC1 and PLCG1 and other downstream effectors. Isoform TrkB-T-Shc is not phosphorylated. Ubiquitinated. Undergoes polyubiquitination upon activation; regulated by NGFR. Ubiquitination regulates the internalization of the receptor. In terms of tissue distribution, isoform TrkB is expressed in the central and peripheral nervous system. In the central nervous system (CNS), expression is observed in the cerebral cortex, hippocampus, thalamus, choroid plexus, granular layer of the cerebellum, brain stem, and spinal cord. In the peripheral nervous system, it is expressed in many cranial ganglia, the ophthalmic nerve, the vestibular system, multiple facial structures, the submaxillary glands, and dorsal root ganglia. Isoform TrkB-T1 is mainly expressed in the brain but also detected in other tissues including pancreas, kidney and heart. Isoform TrkB-T-Shc is predominantly expressed in the brain.

It localises to the cell membrane. It is found in the endosome membrane. Its subcellular location is the early endosome membrane. The protein resides in the cell projection. The protein localises to the axon. It localises to the dendrite. It is found in the cytoplasm. Its subcellular location is the perinuclear region. The protein resides in the postsynaptic density. It catalyses the reaction L-tyrosyl-[protein] + ATP = O-phospho-L-tyrosyl-[protein] + ADP + H(+). With respect to regulation, the neuronal activity and the influx of calcium positively regulate the kinase activity and the internalization of the receptor which are both important for active signaling. Regulated by NGFR that may control the internalization of the receptor. NGFR may also stimulate the activation by BDNF compared to NTF3 and NTF4. SH2D1A inhibits the autophosphorylation of the receptor, and alters the recruitment and activation of downstream effectors and signaling cascades. The formation of active receptors dimers able to fully transduce the ligand-mediated signal, may be negatively regulated by the formation of inactive heterodimers with the non-catalytic isoforms. Receptor tyrosine kinase involved in the development and the maturation of the central and the peripheral nervous systems through regulation of neuron survival, proliferation, migration, differentiation, and synapse formation and plasticity. Receptor for BDNF/brain-derived neurotrophic factor and NTF4/neurotrophin-4. Alternatively can also bind NTF3/neurotrophin-3 which is less efficient in activating the receptor but regulates neuron survival through NTRK2. Upon ligand-binding, undergoes homodimerization, autophosphorylation and activation. Recruits, phosphorylates and/or activates several downstream effectors including SHC1, FRS2, SH2B1, SH2B2 and PLCG1 that regulate distinct overlapping signaling cascades. Through SHC1, FRS2, SH2B1, SH2B2 activates the GRB2-Ras-MAPK cascade that regulates for instance neuronal differentiation including neurite outgrowth. Through the same effectors controls the Ras-PI3 kinase-AKT1 signaling cascade that mainly regulates growth and survival. Through PLCG1 and the downstream protein kinase C-regulated pathways controls synaptic plasticity. Thereby, plays a role in learning and memory by regulating both short term synaptic function and long-term potentiation. PLCG1 also leads to NF-Kappa-B activation and the transcription of genes involved in cell survival. Hence, it is able to suppress anoikis, the apoptosis resulting from loss of cell-matrix interactions. May also play a role in neutrophin-dependent calcium signaling in glial cells and mediate communication between neurons and glia. The polypeptide is BDNF/NT-3 growth factors receptor (NTRK2) (Homo sapiens (Human)).